The following is a 440-amino-acid chain: MAHVTDFKEAGFNTLLEELEWRGLISQSTDRDRLAEALNGEPITYYCGFDPTAASLHIGNLVQLINMRHLQLAGHHPIALVGGATGLIGDPRQSGERTLNPKDVVAGWADRLKNQIGGILDTEGANAVRFVSNYDWTASMTVIDFLRDVGKNFRLGTMLAKDTVARRLNSEEGISFTEFSYQVLQGNDFLHLFDEYHCTLELGGSDQWGNLTSGLDLIHKVRGVDVNVFTSPIITDASGKKFGKSEGNAVWLDATMLSPYKFYQFWINRPDVEMESLLKAFTFLPKAEIERLVEESKTNPGKREAQKTLAWEVTSFVHGEAATQAAIDASGALFGRGGNLEDIDEETLESVLDGFKVVDENGEHVFPVSKPGDRVIDAAQAAGLFKSASEARRAIKSGGVYLNNNRIEDEEQVLAEADFLAGRFALIRRGKKALGAVENR.

Tyrosine 46 is a binding site for L-tyrosine. Residues 51–60 (PTAASLHIGN) carry the 'HIGH' region motif. Positions 181 and 185 each coordinate L-tyrosine. Positions 241–245 (KFGKS) match the 'KMSKS' region motif. Lysine 244 provides a ligand contact to ATP. One can recognise an S4 RNA-binding domain in the interval 373–439 (DRVIDAAQAA…GKKALGAVEN (67 aa)).

This sequence belongs to the class-I aminoacyl-tRNA synthetase family. TyrS type 1 subfamily. In terms of assembly, homodimer.

The protein localises to the cytoplasm. It carries out the reaction tRNA(Tyr) + L-tyrosine + ATP = L-tyrosyl-tRNA(Tyr) + AMP + diphosphate + H(+). Catalyzes the attachment of tyrosine to tRNA(Tyr) in a two-step reaction: tyrosine is first activated by ATP to form Tyr-AMP and then transferred to the acceptor end of tRNA(Tyr). The chain is Tyrosine--tRNA ligase from Bifidobacterium longum subsp. infantis (strain ATCC 15697 / DSM 20088 / JCM 1222 / NCTC 11817 / S12).